The chain runs to 548 residues: 5-epi-aristolochene synthase 1 (548 aa).

Positions 301, 305, 444, 448, and 452 each coordinate Mg(2+). The short motif at 301–305 (DDTFD) is the DDXXD motif element.

This sequence belongs to the terpene synthase family. As to quaternary structure, monomer. Mg(2+) serves as cofactor. Expressed in roots, but not in shoots.

It is found in the cytoplasm. It catalyses the reaction (2E,6E)-farnesyl diphosphate = (+)-5-epi-aristolochene + diphosphate. Its pathway is secondary metabolite biosynthesis; terpenoid biosynthesis. Catalyzes the cyclization of trans,trans-farnesyl diphosphate (FPP) to the bicyclic intermediate 5-epi-aristolochene, initial step in the conversion of FPP to the sesquiterpenoid antifungal phytoalexin capsidiol. Produces germacrene A as an enzyme-bound intermediate that is not released by the enzyme, but is further cyclized to produce the bicyclic 5-epi-aristolochene. The sequence is that of 5-epi-aristolochene synthase 1 (EAS) from Nicotiana attenuata (Coyote tobacco).